The following is a 265-amino-acid chain: Transcription factor LBX1b (265 aa).

Positions Arg121–Leu180 form a DNA-binding region, homeobox.

The protein resides in the nucleus. Its function is as follows. Transcription factor required for the development of hypaxial muscles. The protein is Transcription factor LBX1b of Danio rerio (Zebrafish).